The primary structure comprises 482 residues: Probable polyamine transporter At1g31820 (482 aa).

Transmembrane regions (helical) follow at residues 36–56 (VSML…PFGA), 66–86 (LLAL…EALI), 94–114 (FPIN…FWGF), 143–163 (VPAL…TLLL), 171–191 (LTIV…PFAV), 254–274 (VIFV…AIPL), 294–314 (GWLQ…MFLA), 344–364 (TPLL…GLSF), 367–387 (IIAA…IAFV), 406–426 (TVGS…VIVL), and 429–449 (IKVA…KPCL).

This sequence belongs to the amino acid-polyamine-organocation (APC) superfamily. Polyamine:cation symporter (PHS) (TC 2.A.3.12) family.

The protein localises to the cell membrane. Its function is as follows. Probable cell membrane polyamine/proton symporter involved in the polyamine uptake in cells. This is Probable polyamine transporter At1g31820 from Arabidopsis thaliana (Mouse-ear cress).